We begin with the raw amino-acid sequence, 208 residues long: Putative 3-methyladenine DNA glycosylase (208 aa).

The protein belongs to the DNA glycosylase MPG family.

The chain is Putative 3-methyladenine DNA glycosylase from Lactobacillus johnsonii (strain CNCM I-12250 / La1 / NCC 533).